A 314-amino-acid polypeptide reads, in one-letter code: Hydroxyethylthiazole kinase (314 aa).

Residue M70 coordinates substrate. The ATP site is built by R145 and S217. Residue G244 coordinates substrate.

Belongs to the Thz kinase family. Mg(2+) is required as a cofactor.

It carries out the reaction 5-(2-hydroxyethyl)-4-methylthiazole + ATP = 4-methyl-5-(2-phosphooxyethyl)-thiazole + ADP + H(+). The protein operates within cofactor biosynthesis; thiamine diphosphate biosynthesis; 4-methyl-5-(2-phosphoethyl)-thiazole from 5-(2-hydroxyethyl)-4-methylthiazole: step 1/1. Its function is as follows. Catalyzes the phosphorylation of the hydroxyl group of 4-methyl-5-beta-hydroxyethylthiazole (THZ). This Bifidobacterium longum (strain DJO10A) protein is Hydroxyethylthiazole kinase.